Consider the following 283-residue polypeptide: Diaminopimelate epimerase (283 aa).

3 residues coordinate substrate: N13, Q45, and N65. The active-site Proton donor is the C74. Substrate contacts are provided by residues 75 to 76, N156, N190, and 208 to 209; these read GN and ER. The active-site Proton acceptor is C217. 218–219 contributes to the substrate binding site; the sequence is GS.

The protein belongs to the diaminopimelate epimerase family. Homodimer.

The protein localises to the cytoplasm. The catalysed reaction is (2S,6S)-2,6-diaminopimelate = meso-2,6-diaminopimelate. The protein operates within amino-acid biosynthesis; L-lysine biosynthesis via DAP pathway; DL-2,6-diaminopimelate from LL-2,6-diaminopimelate: step 1/1. Its function is as follows. Catalyzes the stereoinversion of LL-2,6-diaminopimelate (L,L-DAP) to meso-diaminopimelate (meso-DAP), a precursor of L-lysine and an essential component of the bacterial peptidoglycan. In Bartonella tribocorum (strain CIP 105476 / IBS 506), this protein is Diaminopimelate epimerase.